Consider the following 487-residue polypeptide: Serine carboxypeptidase-like 38 (487 aa).

The signal sequence occupies residues 1–20 (MGKQQDWSVTACIFLSLSLA). 3 disulfides stabilise this stretch: Cys-119–Cys-368, Cys-280–Cys-290, and Cys-315–Cys-336. The active site involves Ser-215. N-linked (GlcNAc...) asparagine glycosylation is present at Asn-233. 2 N-linked (GlcNAc...) asparagine glycosylation sites follow: Asn-317 and Asn-357. The active site involves Asp-407. Asn-423 and Asn-449 each carry an N-linked (GlcNAc...) asparagine glycan. His-460 is an active-site residue.

It belongs to the peptidase S10 family. Expressed in seedlings, roots, leaves, flowers and siliques.

Its subcellular location is the secreted. Probable carboxypeptidase. The polypeptide is Serine carboxypeptidase-like 38 (SCPL38) (Arabidopsis thaliana (Mouse-ear cress)).